The sequence spans 362 residues: uncharacterized protein (362 aa).

This sequence belongs to the carbohydrate kinase PfkB family.

This is an uncharacterized protein from Escherichia coli (strain K12).